An 800-amino-acid polypeptide reads, in one-letter code: Kolavenyl diphosphate synthase TPS5, chloroplastic (800 aa).

The N-terminal 75 residues, Met1–Asp75, are a transit peptide targeting the chloroplast. Lys244 provides a ligand contact to substrate. Positions 375 and 377 each coordinate Mg(2+). The DXDD motif signature appears at Asp375–Asp378. Lys461 is a substrate binding site.

It belongs to the terpene synthase family. The cofactor is Mg(2+). Mostly expressed in trichomes of leaves and fruits.

Its subcellular location is the plastid. It is found in the chloroplast. It catalyses the reaction (2E,6E,10E)-geranylgeranyl diphosphate = (+)-kolavenyl diphosphate. The protein operates within secondary metabolite biosynthesis; terpenoid biosynthesis. Its function is as follows. Involved in the biosynthesis of labdane-type diterpenoid including cleroda-dienols, and peregrinol lactones and furan derivatives, dopaminergic diterpenoids that can bind to dopamine receptors in the human pituitary gland, have probably ability to lower prolactin levels, and are used to treat menstrual cycle disorders (e.g. premenstrual syndrome and mastodynia). Terpene synthase that produces kolavenyl diphosphate from geranylgeranyl diphosphate (GGPP). The polypeptide is Kolavenyl diphosphate synthase TPS5, chloroplastic (Vitex agnus-castus (Chaste tree)).